The primary structure comprises 276 residues: Kallikrein-11 (276 aa).

A signal peptide spans 1 to 44; sequence MRRLKSDWKLSTETREPGARPALLQARMILRLIALALVTGHVGG. A propeptide spans 45–47 (activation peptide); it reads ETR. One can recognise a Peptidase S1 domain in the interval 48–274; that stretch reads IIKGYECRPH…YFNWIHEVMR (227 aa). 5 disulfides stabilise this stretch: Cys-54–Cys-189, Cys-73–Cys-89, Cys-168–Cys-235, Cys-200–Cys-214, and Cys-225–Cys-250. Residue His-88 is the Charge relay system of the active site. A glycan (N-linked (GlcNAc...) asparagine) is linked at Asn-125. The Charge relay system role is filled by Asp-136. N-linked (GlcNAc...) asparagine glycosylation is found at Asn-191 and Asn-207. The active-site Charge relay system is the Ser-229. Asn-236 carries N-linked (GlcNAc...) asparagine glycosylation.

This sequence belongs to the peptidase S1 family. Kallikrein subfamily. As to expression, expressed in brain and prostate (isoform 1) and prostate (isoform 2).

The protein resides in the secreted. In terms of biological role, possible multifunctional protease. Efficiently cleaves 'bz-Phe-Arg-4-methylcoumaryl-7-amide', a kallikrein substrate, and weakly cleaves other substrates for kallikrein and trypsin. The chain is Kallikrein-11 (Klk11) from Mus musculus (Mouse).